The primary structure comprises 106 residues: Small ribosomal subunit protein uS10 (106 aa).

This sequence belongs to the universal ribosomal protein uS10 family. Part of the 30S ribosomal subunit.

Its function is as follows. Involved in the binding of tRNA to the ribosomes. The protein is Small ribosomal subunit protein uS10 of Hyphomonas neptunium (strain ATCC 15444).